Reading from the N-terminus, the 485-residue chain is DNA polymerase subunit gamma-2 (485 aa).

The interval G28–G65 is disordered. The residue at position 38 (S38) is a Phosphoserine. Positions S46 to E58 are enriched in basic and acidic residues.

Heterotrimer composed of a catalytic subunit and a homodimer of accessory subunits (POLG:POLG2).

It is found in the mitochondrion. The protein resides in the mitochondrion matrix. The protein localises to the mitochondrion nucleoid. Accessory subunit of DNA polymerase gamma solely responsible for replication of mitochondrial DNA (mtDNA). Acts as an allosteric regulator of the holoenzyme activities. Enhances the polymerase activity and the processivity of POLG by increasing its interactions with the DNA template. Suppresses POLG exonucleolytic proofreading especially toward homopolymeric templates bearing mismatched termini. Binds to single-stranded DNA. The chain is DNA polymerase subunit gamma-2 from Homo sapiens (Human).